A 98-amino-acid chain; its full sequence is uncharacterized protein (98 aa).

The protein belongs to the HHV-5 UL19 protein family.

This is an uncharacterized protein from Human cytomegalovirus (strain AD169) (HHV-5).